The primary structure comprises 580 residues: MAPSDTPPSAEDLPSQGELALFAPPATAEDALVPASMVNAWIYCPRLAVLEWGRGEKARSVDLIAGLRAHQATESGPTPALPDPMVLREDQSLKTRRLSLSSERLGLTAELDLLDVEEGMVIPVEIKVGKRPSVDEGAYLPERAQVCAQALLLREAGYTCLEGALWFAESRERVTVDLTEALVTATLVATSDLRLTVASGRLPPPLDHSAKCPRCSLLPICLPDEIAWFRKGSIARTPPPPASPALPLYGQTPGARIGKKDYTLVIQVEGEADRSLALDEISEVVLAGPVSLTTPAIHELLRREIPVAWMSSGFWFLGSTGGQGPRSAAVRTAQYALAGDERRRQAFARDLVSAKIRNGRTLLRRNWRGAEAERQIALDRLARLAERATTAETTACLLGIEGEAAAVYFRAFPQLFTQAVTTLPAFAFERRNRRPPADPVNACLSLCYAVLTRTLSSALSIAGLDPWKGFYHTERPGRPALALDLIESFRPVLADSTVLMVLNNGEIGTNDFLYAGGGCALKPNARRGLIAAYERRLDQETTHPVFGYQLSMRRLIQVQARLLARFVSGDIPRYPHYCPR.

A CRISPR-associated exonuclease Cas4 region spans residues 1 to 223 (MAPSDTPPSA…RCSLLPICLP (223 aa)). A [4Fe-4S] cluster-binding site is contributed by C44. Residues D112 and E125 each contribute to the Mn(2+) site. Residues C212, C215, and C221 each coordinate [4Fe-4S] cluster. The tract at residues 248–580 (LYGQTPGARI…IPRYPHYCPR (333 aa)) is CRISPR-associated endonuclease Cas1. Residues E401, H472, and E487 each contribute to the Mn(2+) site.

It in the N-terminal section; belongs to the CRISPR-associated exonuclease Cas4 family. This sequence in the C-terminal section; belongs to the CRISPR-associated endonuclease Cas1 family. Homodimer, forms a heterotetramer with a Cas2 homodimer. It depends on [4Fe-4S] cluster as a cofactor. Requires Mg(2+) as cofactor. The cofactor is Mn(2+).

The enzyme catalyses exonucleolytic cleavage in the 5'- to 3'-direction to yield nucleoside 3'-phosphates.. Its function is as follows. CRISPR (clustered regularly interspaced short palindromic repeat), is an adaptive immune system that provides protection against mobile genetic elements (viruses, transposable elements and conjugative plasmids). CRISPR clusters contain spacers, sequences complementary to antecedent mobile elements, and target invading nucleic acids. CRISPR clusters are transcribed and processed into CRISPR RNA (crRNA). The Cas4 region acts as a ssDNA exonuclease, while the Cas1 region acts as a dsDNA endonuclease. Involved in the integration of spacer DNA into the CRISPR cassette. In Rhodospirillum rubrum (strain ATCC 11170 / ATH 1.1.1 / DSM 467 / LMG 4362 / NCIMB 8255 / S1), this protein is CRISPR-associated exonuclease Cas4/endonuclease Cas1 fusion (cas4-cas1).